A 329-amino-acid polypeptide reads, in one-letter code: Sorting assembly machinery 35 kDa subunit (329 aa).

As to quaternary structure, component of the mitochondrial outer membrane sorting assembly machinery (SAM or TOB) complex, which at least consists of SAM35, SAM37 and SAM50.

It is found in the mitochondrion outer membrane. Essential component of the mitochondrial outer membrane sorting assembly machinery (SAM or TOB) complex, which is required for the sorting of proteins with complicated topology, such as beta-barrel proteins, to the mitochondrial outer membrane after import by the TOM complex. The sequence is that of Sorting assembly machinery 35 kDa subunit (SAM35) from Saccharomyces cerevisiae (strain ATCC 204508 / S288c) (Baker's yeast).